We begin with the raw amino-acid sequence, 289 residues long: Diacylglycerol pyrophosphate phosphatase 1 (289 aa).

Over 1-21 the chain is Vacuolar; the sequence is MNRVSFIKTPFNIGAKWRLED. Residues 22–42 traverse the membrane as a helical segment; sequence VFLLIIMILLNYPVYYQQPFE. The Cytoplasmic segment spans residues 43-65; sequence RQFYINDLTISHPYATTERVNNN. A helical membrane pass occupies residues 66–86; it reads MLFVYSFVVPSLTILIIGSIL. Over 87–92 the chain is Vacuolar; that stretch reads ADRRHL. Residues 93–113 form a helical membrane-spanning segment; it reads IFILYTSLLGLSLAWFSTSFF. Residues 114-172 lie on the Cytoplasmic side of the membrane; it reads TNFIKNWIGRLRPDFLDRCQPVEGLPLDTLFTAKDVCTTKNHERLLDGFRTTPSGHSSE. The interval 118–126 is phosphatase sequence motif I; that stretch reads KNWIGRLRP. The tract at residues 166 to 169 is phosphatase sequence motif II; the sequence is PSGH. 2 consecutive transmembrane segments (helical) span residues 173–193 and 194–214; these read SFAG…TESP and LMPL…ALIA. Over 215–222 the chain is Cytoplasmic; it reads LSRTQDYR. The tract at residues 216 to 227 is phosphatase sequence motif III; that stretch reads SRTQDYRHHFVD. Residues 223–243 form a helical membrane-spanning segment; that stretch reads HHFVDVILGSMLGYIMAHFFY. Residues 244–289 are Vacuolar-facing; that stretch reads RRIFPPIDDPLPFKPLMDDSDVTLEEAVTHQRIPDEELHPLSDEGM. Phosphoserine is present on Ser285.

The protein belongs to the PA-phosphatase related phosphoesterase family.

It localises to the vacuole membrane. The enzyme catalyses a 1,2-diacyl-sn-glycerol 3-diphosphate + H2O = a 1,2-diacyl-sn-glycero-3-phosphate + phosphate + H(+). The catalysed reaction is a 1,2-diacyl-sn-glycero-3-phosphate + H2O = a 1,2-diacyl-sn-glycerol + phosphate. It carries out the reaction a 1-acyl-sn-glycero-3-phosphate + H2O = a 1-acyl-sn-glycerol + phosphate. Its activity is regulated as follows. Inhibited by sodium fluoride (NaF) and pyrophosphate. Strongly inhibited by manganese ion and, to a lower extent, by magnesium and calcium ions. Also inhibited by Cu(2+) ion. In an indirect manner, it is also inhibited by the zinc ion which is able to form a complex with DGPP and prevent the enzyme from removing the phosphate from the substrate. Not inhibited by N-ethylmaleimide. Its function is as follows. Catalyzes the dephosphorylation of diacylglycerol diphosphate (DGPP) to phosphatidate (PA) and the subsequent dephosphorylation of PA to diacylglycerol (DAG). Together with LPP1, regulates intracellular DGPP and PA levels, which are phospholipid molecules believed to play a signaling role in stress response. Can also use lysophosphatidic acid (LPA) and phosphatidylglycerophosphate as substrates. Substrate preference is DGPP &gt; LPA &gt; PA. Activity is independent of a divalent cation ion and insensitive to inhibition by N-ethylmaleimide. This is Diacylglycerol pyrophosphate phosphatase 1 (DPP1) from Saccharomyces cerevisiae (strain ATCC 204508 / S288c) (Baker's yeast).